We begin with the raw amino-acid sequence, 387 residues long: ATP phosphoribosyltransferase regulatory subunit (387 aa).

This sequence belongs to the class-II aminoacyl-tRNA synthetase family. HisZ subfamily. Heteromultimer composed of HisG and HisZ subunits.

The protein resides in the cytoplasm. It functions in the pathway amino-acid biosynthesis; L-histidine biosynthesis; L-histidine from 5-phospho-alpha-D-ribose 1-diphosphate: step 1/9. Functionally, required for the first step of histidine biosynthesis. May allow the feedback regulation of ATP phosphoribosyltransferase activity by histidine. The polypeptide is ATP phosphoribosyltransferase regulatory subunit (Psychrobacter arcticus (strain DSM 17307 / VKM B-2377 / 273-4)).